Reading from the N-terminus, the 884-residue chain is E3 SUMO-protein ligase SIZ1 (884 aa).

The SAP domain occupies 11–45; the sequence is LSYFRIKELKDVLTQLGLSKQGKKQELVDRILTLL. The tract at residues 84–103 is disordered; it reads LASKGQVSSDTSNLKVKGEP. Polar residues predominate over residues 88-97; that stretch reads GQVSSDTSNL. A Glycyl lysine isopeptide (Lys-Gly) (interchain with G-Cter in SUMO) cross-link involves residue lysine 100. Residues 112 to 168 form a PHD-type zinc finger; the sequence is KVRCVCGNSLETDSMIQCEDPRCHVWQHVGCVILPDKPMDGNPPLPESFYCEICRLT. An SP-RING-type zinc finger spans residues 346–429; the sequence is SDSDIEVVAD…FNRITSKMKH (84 aa). Zn(2+) contacts are provided by cysteine 379, histidine 381, cysteine 402, and cysteine 405. A Glycyl lysine isopeptide (Lys-Gly) (interchain with G-Cter in SUMO) cross-link involves residue lysine 488. Disordered stretches follow at residues 753 to 778, 792 to 824, and 836 to 869; these read PSLQ…ADMS, GDSA…MDTT, and DSRQ…QTRH. Polar residues-rich tracts occupy residues 766-778 and 803-824; these read SAQS…ADMS and ATTN…MDTT. The span at 837–847 shows a compositional bias: basic and acidic residues; that stretch reads SRQDKAKKQRS.

The protein belongs to the PIAS family. Interacts (via PHD domain) with SCE1, GTE3 and GTE5. Post-translationally, autosumoylated at Lys-100 and Lys-488. In terms of tissue distribution, ubiquitous.

The protein resides in the nucleus speckle. Its pathway is protein modification; protein sumoylation. Functionally, E3 SUMO protein ligase involved in regulation processes. Mediates SUMO/ attachment to PHR1, a MYB transcriptional activator controlling the phosphate deficiency responses. Functions as an upstream negative regulator of salicylic acid (SA) accumulation and subsequent SA-mediated systemic acquired resistance (SAR) signaling. Probably not involved in jasmonic acid (JA)-mediated defense response. Participates in abiotic stress-induced sumoylation. Controls heat shock-induced SUMO1 and SUMO2 conjugation and facilitates basal thermotolerance. Involved in freezing tolerance by mediating sumoylation of ICE1, a transcription activator of the cold signaling regulator CBF3/DREB1A. Acts as a positive regulator of drought stress tolerance. Acts as a floral repressor that promotes FLC expression by repressing FLD activity through sumoylation. Acts as a negative regulator of abscisic acid (ABA) signaling through ABI5 sumoylation. Mediates sumoylation of SCE1, GTE3 and GTE5. Functions as a negative regulator of SnRK1 signaling through sumoylation of several components of the SnRK1 complex. The sequence is that of E3 SUMO-protein ligase SIZ1 from Arabidopsis thaliana (Mouse-ear cress).